The sequence spans 312 residues: tRNA dimethylallyltransferase (312 aa).

13–20 contacts ATP; sequence GPTAAGKT. 15–20 contacts substrate; that stretch reads TAAGKT. Interaction with substrate tRNA regions lie at residues 38–41, 162–166, and 244–249; these read DSAM, QRLLR, and RCVGYR.

This sequence belongs to the IPP transferase family. As to quaternary structure, monomer. Requires Mg(2+) as cofactor.

The enzyme catalyses adenosine(37) in tRNA + dimethylallyl diphosphate = N(6)-dimethylallyladenosine(37) in tRNA + diphosphate. Its function is as follows. Catalyzes the transfer of a dimethylallyl group onto the adenine at position 37 in tRNAs that read codons beginning with uridine, leading to the formation of N6-(dimethylallyl)adenosine (i(6)A). This chain is tRNA dimethylallyltransferase, found in Chromohalobacter salexigens (strain ATCC BAA-138 / DSM 3043 / CIP 106854 / NCIMB 13768 / 1H11).